The sequence spans 215 residues: N-(5'-phosphoribosyl)anthranilate isomerase (215 aa).

It belongs to the TrpF family.

It carries out the reaction N-(5-phospho-beta-D-ribosyl)anthranilate = 1-(2-carboxyphenylamino)-1-deoxy-D-ribulose 5-phosphate. The protein operates within amino-acid biosynthesis; L-tryptophan biosynthesis; L-tryptophan from chorismate: step 3/5. The sequence is that of N-(5'-phosphoribosyl)anthranilate isomerase from Rhizobium meliloti (strain 1021) (Ensifer meliloti).